The sequence spans 90 residues: DNA-binding protein HU-beta (90 aa).

This sequence belongs to the bacterial histone-like protein family. In terms of assembly, heterodimer of an alpha and a beta chain.

Its function is as follows. Histone-like DNA-binding protein which is capable of wrapping DNA to stabilize it, and thus to prevent its denaturation under extreme environmental conditions. The sequence is that of DNA-binding protein HU-beta (hupB) from Pseudomonas aeruginosa (strain ATCC 15692 / DSM 22644 / CIP 104116 / JCM 14847 / LMG 12228 / 1C / PRS 101 / PAO1).